A 101-amino-acid polypeptide reads, in one-letter code: NAD(P)H-quinone oxidoreductase subunit 4L, chloroplastic (101 aa).

3 helical membrane-spanning segments follow: residues 2–22 (MLEH…YGLI), 32–52 (MCLE…SDLF), and 61–81 (IFSI…PAIV).

The protein belongs to the complex I subunit 4L family. In terms of assembly, NDH is composed of at least 16 different subunits, 5 of which are encoded in the nucleus.

It localises to the plastid. Its subcellular location is the chloroplast thylakoid membrane. The enzyme catalyses a plastoquinone + NADH + (n+1) H(+)(in) = a plastoquinol + NAD(+) + n H(+)(out). It catalyses the reaction a plastoquinone + NADPH + (n+1) H(+)(in) = a plastoquinol + NADP(+) + n H(+)(out). Its function is as follows. NDH shuttles electrons from NAD(P)H:plastoquinone, via FMN and iron-sulfur (Fe-S) centers, to quinones in the photosynthetic chain and possibly in a chloroplast respiratory chain. The immediate electron acceptor for the enzyme in this species is believed to be plastoquinone. Couples the redox reaction to proton translocation, and thus conserves the redox energy in a proton gradient. The protein is NAD(P)H-quinone oxidoreductase subunit 4L, chloroplastic of Ceratophyllum demersum (Rigid hornwort).